Reading from the N-terminus, the 346-residue chain is Ephrin-B1 (346 aa).

An N-terminal signal peptide occupies residues 1-27; sequence MARPGQRWLGKWLVAMVVWALCRLATP. Over 28-237 the chain is Extracellular; the sequence is LAKNLEPVSW…GDPDGFFNSK (210 aa). In terms of domain architecture, Ephrin RBD spans 30-164; sequence KNLEPVSWSS…TRTMKIIMKV (135 aa). Disulfide bonds link cysteine 64-cysteine 101 and cysteine 89-cysteine 153. The N-linked (GlcNAc...) asparagine glycan is linked to asparagine 139. Residues 169 to 228 are disordered; the sequence is NAVTPEQLTTSRPSKEADNTVKMATQAPGSRGSLGDSDGKHETVNQEEKSGPGASGGSSG. A compositionally biased stretch (basic and acidic residues) spans 205 to 218; the sequence is SDGKHETVNQEEKS. Residues 238 to 258 traverse the membrane as a helical segment; it reads VALFAAVGAGCVIFLLIIIFL. Residues 259–346 are Cytoplasmic-facing; that stretch reads TVLLLKLRKR…QSPANIYYKV (88 aa). Residues 260 to 273 carry the Nuclear localization signal motif; it reads VLLLKLRKRHRKHT. The interval 263 to 294 is interaction with ZHX2; the sequence is LKLRKRHRKHTQQRAAALSLSTLASPKGGSGT. Phosphoserine occurs at positions 281 and 287. The PDZ-binding signature appears at 344-346; it reads YKV.

The protein belongs to the ephrin family. In terms of assembly, interacts (via PDZ-binding motif) with GRIP1 and GRIP2 (via PDZ domain 6). Interacts with TLE1. The intracellular domain peptide interacts with ZHX2; the interaction enhances ZHX2 transcriptional repression activity. Inducible phosphorylation of tyrosine residues in the cytoplasmic domain. In terms of processing, proteolytically processed. The ectodomain is cleaved, probably by a metalloprotease, to produce a membrane-tethered C-terminal fragment. This fragment is then further processed by the gamma-secretase complex to yield a soluble intracellular domain peptide which can translocate to the nucleus. The intracellular domain peptide is highly labile suggesting that it is targeted for degradation by the proteasome. As to expression, widely expressed. Detected in both neuronal and non-neuronal tissues. Seems to have particularly strong expression in retina, sciatic nerve, heart and spinal cord.

The protein localises to the cell membrane. Its subcellular location is the membrane raft. The protein resides in the nucleus. In terms of biological role, cell surface transmembrane ligand for Eph receptors, a family of receptor tyrosine kinases which are crucial for migration, repulsion and adhesion during neuronal, vascular and epithelial development. Binding to Eph receptors residing on adjacent cells leads to contact-dependent bidirectional signaling into neighboring cells. Shows high affinity for the receptor tyrosine kinase EPHB1/ELK. Can also bind EPHB2 and EPHB3. Binds to, and induces collapse of, commissural axons/growth cones in vitro. May play a role in constraining the orientation of longitudinally projecting axons. This chain is Ephrin-B1 (EFNB1), found in Homo sapiens (Human).